Here is a 1690-residue protein sequence, read N- to C-terminus: Restin homolog (1690 aa).

2 stretches are compositionally biased toward polar residues: residues 1–11 (MSDDTSASGGT) and 39–51 (NIPT…TGIP). The disordered stretch occupies residues 1 to 105 (MSDDTSASGG…ESDDNLSSIN (105 aa)). Residues Ser-64 and Ser-67 each carry the phosphoserine modification. Residues 143–185 (GDTHFAAGEWAGVVLDEPNGKNDGCVSGKRYFQCEPKRGIFSR) form the CAP-Gly 1 domain. Residues 195–227 (AGAQTPTSPLAKSSPDRSRTVSPTASIRSSMLR) form a disordered region. Residues 214 to 226 (TVSPTASIRSSML) show a composition bias toward polar residues. Ser-216 is modified (phosphoserine). The region spanning 260 to 302 (GETQFAPGNWCGVELDEPSGKNDGTVDDIRYFECKPKYGVFVP) is the CAP-Gly 2 domain. 3 positions are modified to phosphoserine: Ser-309, Ser-322, and Ser-325. A Phosphothreonine modification is found at Thr-327. Ser-328 is subject to Phosphoserine. Thr-362 carries the phosphothreonine modification. Coiled coils occupy residues 378–468 (QHVE…VSAT), 484–660 (GALQ…DMLR), 667–916 (EEKS…TKLK), 926–981 (LSSC…ELQA), 1001–1121 (ATGH…EAIQ), 1158–1549 (EADM…AQMN), and 1565–1600 (DIET…LETL). Positions 843 to 905 (QQAAASGEEG…GSLEEEAKKS (63 aa)) are disordered. Polar residues predominate over residues 865–885 (QLKSQAEETQSELKSTQSNLE). Disordered stretches follow at residues 1031–1052 (QLQD…KEKS) and 1400–1419 (KLDE…NEIQ). 2 stretches are compositionally biased toward basic and acidic residues: residues 1040-1052 (TKLK…KEKS) and 1410-1419 (SQKKSHNEIQ). The tract at residues 1635 to 1665 (TEDCPIQGSEDQDYSTPSSESNNNEKERKLP) is disordered. A Phosphothreonine modification is found at Thr-1681. At Ser-1682 the chain carries Phosphoserine.

In terms of assembly, interacts with Lva. In terms of tissue distribution, specifically expressed at the tip of the furrow in cellularizing blastoderms. CLIP-190 and jar are coexpressed at several times in development and in a number of tissues, including embryonic axonal neuron processes and posterior pole.

Its subcellular location is the cytoplasm. It localises to the cytoskeleton. The protein resides in the golgi apparatus. It is found in the microtubule organizing center. The protein localises to the perinuclear region. Functionally, together CLIP-190 and jar may coordinate the interaction between the actin and microtubule cytoskeleton. May link endocytic vesicles to microtubules. May play a role in formation of furrows during cellularization. This is Restin homolog (CLIP-190) from Drosophila melanogaster (Fruit fly).